The following is a 25-amino-acid chain: Neuromedin-U-25 (25 aa).

Asn-25 carries the post-translational modification Asparagine amide.

Belongs to the NmU family.

It is found in the secreted. Stimulates uterine smooth muscle contraction and causes selective vasoconstriction. The polypeptide is Neuromedin-U-25 (Rana temporaria (European common frog)).